A 592-amino-acid chain; its full sequence is Calnexin (592 aa).

A signal peptide spans 1–20 (MEGKWLLCMLLVLGTAIVEA). At 21-481 (HDGHDDDVID…QMIEAAEERP (461 aa)) the chain is on the lumenal side. Ser-74 and Asp-117 together coordinate Ca(2+). Lys-137 carries the N6-acetyllysine modification. Cysteines 160 and 194 form a disulfide. The an alpha-D-glucoside site is built by Tyr-164, Lys-166, Tyr-185, and Asp-192. The tract at residues 260 to 345 (GNLLNDMTPP…AEKPEDWDED (86 aa)) is disordered. Residues 274 to 319 (REIEDPEDRKPEDWDERPKIPDPEAVKPDDWDEDAPAKIPDEEATK) are compositionally biased toward basic and acidic residues. The tract at residues 276–409 (IEDPEDRKPE…RKIPNPDFFE (134 aa)) is p domain (Extended arm). 5 consecutive repeat copies span residues 278-290 (DPED…WDER), 295-307 (DPEA…WDED), 314-326 (DEEA…WLDD), 333-345 (DPDA…WDED), and 348-358 (GEWEAPQIANP). 2 4 X approximate repeats regions span residues 278–345 (DPED…WDED) and 348–405 (GEWE…IPNP). Residues 323–345 (WLDDEPEYVPDPDAEKPEDWDED) are compositionally biased toward acidic residues. An interaction with PPIB region spans residues 326-359 (DEPEYVPDPDAEKPEDWDEDMDGEWEAPQIANPK). Cysteines 360 and 366 form a disulfide. 3 consecutive repeat copies span residues 367–377 (GVWQRPMIDNP), 381–391 (GKWKPPMIDNP), and 395–405 (GIWKPRKIPNP). Position 425 (Glu-425) interacts with an alpha-D-glucoside. Asp-436 is a Ca(2+) binding site. Residues 482–502 (WLWVVYILTVALPVFLVILFC) traverse the membrane as a helical segment. S-palmitoyl cysteine attachment occurs at residues Cys-502 and Cys-503. The Cytoplasmic portion of the chain corresponds to 503-592 (CSGKKQTSAM…SPRNRKPRRE (90 aa)). Residues 503-592 (CSGKKQTSAM…SPRNRKPRRE (90 aa)) form a sufficient to mediate interaction with SGIP1 region. The disordered stretch occupies residues 511–592 (AMEYKKTDAP…SPRNRKPRRE (82 aa)). Positions 525–547 (KEEEEEKEEEKDKGDEEEEGEEK) are enriched in acidic residues. The residue at position 554 (Ser-554) is a Phosphoserine. Position 562 is a phosphothreonine (Thr-562). A Phosphoserine; by MAPK3 modification is found at Ser-564. The residue at position 583 (Ser-583) is a Phosphoserine.

This sequence belongs to the calreticulin family. Interacts with MAPK3/ERK1. Interacts with KCNH2. Associates with ribosomes. Interacts with SGIP1; involved in negative regulation of endocytosis. The palmitoylated form interacts with the ribosome-translocon complex component SSR1, promoting efficient folding of glycoproteins. Interacts with SERPINA2P/SERPINA2 and with the S and Z variants of SERPINA1. Interacts with PPIB. Interacts with ZNRF4. Interacts with SMIM22. Interacts with TMX2. Interacts with TMEM35A/NACHO and CHRNA7. Interacts with reticulophagy regulators RETREG2 and RETREG3. Interacts with DNM1L; may form part of a larger protein complex at the ER-mitochondrial interface during mitochondrial fission. Interacts with ADAM7. Phosphorylated at Ser-564 by MAPK3/ERK1. Phosphorylation by MAPK3/ERK1 increases its association with ribosomes. Post-translationally, palmitoylation by DHHC6 leads to the preferential localization to the perinuclear rough ER. It mediates the association of calnexin with the ribosome-translocon complex (RTC) which is required for efficient folding of glycosylated proteins. In terms of processing, ubiquitinated, leading to proteasomal degradation. Probably ubiquitinated by ZNRF4.

It is found in the endoplasmic reticulum membrane. The protein localises to the mitochondrion membrane. The protein resides in the melanosome membrane. Its function is as follows. Calcium-binding protein that interacts with newly synthesized monoglucosylated glycoproteins in the endoplasmic reticulum. It may act in assisting protein assembly and/or in the retention within the ER of unassembled protein subunits. It seems to play a major role in the quality control apparatus of the ER by the retention of incorrectly folded proteins. Associated with partial T-cell antigen receptor complexes that escape the ER of immature thymocytes, it may function as a signaling complex regulating thymocyte maturation. Additionally it may play a role in receptor-mediated endocytosis at the synapse. The chain is Calnexin (CANX) from Pongo abelii (Sumatran orangutan).